The sequence spans 256 residues: Ribonuclease HII (256 aa).

The region spanning 67–255 (QLVGGVDEVG…VSEMVGLKKA (189 aa)) is the RNase H type-2 domain. D73, E74, and D165 together coordinate a divalent metal cation.

The protein belongs to the RNase HII family. Mn(2+) serves as cofactor. Mg(2+) is required as a cofactor.

It is found in the cytoplasm. It carries out the reaction Endonucleolytic cleavage to 5'-phosphomonoester.. Its function is as follows. Endonuclease that specifically degrades the RNA of RNA-DNA hybrids. This Lactobacillus delbrueckii subsp. bulgaricus (strain ATCC 11842 / DSM 20081 / BCRC 10696 / JCM 1002 / NBRC 13953 / NCIMB 11778 / NCTC 12712 / WDCM 00102 / Lb 14) protein is Ribonuclease HII.